A 122-amino-acid chain; its full sequence is Ribosome-binding factor A (122 aa).

The protein belongs to the RbfA family. In terms of assembly, monomer. Binds 30S ribosomal subunits, but not 50S ribosomal subunits or 70S ribosomes.

The protein resides in the cytoplasm. Its function is as follows. One of several proteins that assist in the late maturation steps of the functional core of the 30S ribosomal subunit. Associates with free 30S ribosomal subunits (but not with 30S subunits that are part of 70S ribosomes or polysomes). Required for efficient processing of 16S rRNA. May interact with the 5'-terminal helix region of 16S rRNA. The protein is Ribosome-binding factor A of Dichelobacter nodosus (strain VCS1703A).